The chain runs to 368 residues: Agmatine deiminase (368 aa).

Catalysis depends on Cys357, which acts as the Amidino-cysteine intermediate.

It belongs to the agmatine deiminase family. Homodimer.

It carries out the reaction agmatine + H2O = N-carbamoylputrescine + NH4(+). It functions in the pathway amine and polyamine biosynthesis; putrescine biosynthesis via agmatine pathway; N-carbamoylputrescine from agmatine: step 1/1. Its function is as follows. Mediates the hydrolysis of agmatine into N-carbamoylputrescine in the arginine decarboxylase (ADC) pathway of putrescine biosynthesis, a basic polyamine. The polypeptide is Agmatine deiminase (Pseudomonas fluorescens (strain ATCC BAA-477 / NRRL B-23932 / Pf-5)).